Reading from the N-terminus, the 340-residue chain is Myb-related protein Zm1 (340 aa).

2 HTH myb-type domains span residues lysine 11 to leucine 63 and arginine 64 to valine 118. 2 DNA-binding regions (H-T-H motif) span residues tryptophan 39–leucine 63 and tryptophan 91–leucine 114. Residues lysine 116–alanine 126 are compositionally biased toward basic residues. Disordered stretches follow at residues lysine 116 to aspartate 173 and aspartate 190 to threonine 209. The segment covering alanine 133–serine 166 has biased composition (low complexity).

It localises to the nucleus. Functionally, transcription factor that positively regulates genes involved in anthocyanin biosynthesis such as A1. The protein is Myb-related protein Zm1 of Zea mays (Maize).